An 84-amino-acid chain; its full sequence is Alpha-like toxin BmK M1 (84 aa).

A signal peptide spans 1 to 19 (MNYLVMISFALLLMTGVES). Residues 21–83 (RDAYIAKPHN…VPIRVPGKCH (63 aa)) form the LCN-type CS-alpha/beta domain. 4 cysteine pairs are disulfide-bonded: cysteine 31–cysteine 82, cysteine 35–cysteine 55, cysteine 41–cysteine 65, and cysteine 45–cysteine 67. A propeptide (removed by a carboxypeptidase) is located at residue arginine 84.

The protein belongs to the long (4 C-C) scorpion toxin superfamily. Sodium channel inhibitor family. Alpha subfamily. As to expression, expressed by the venom gland.

It is found in the secreted. Its function is as follows. Alpha toxins bind voltage-independently at site-3 of sodium channels (Nav) and inhibit the inactivation of the activated channels thereby blocking neuronal transmission. This toxin is active against both mammals and insects, and is classified as an alpha-like toxin. It is active on Nav1.2/SCN2A (EC(50)=139-252 nM), Nav1.3/SCN3A (EC(50)=565 nM), Nav1.4/SCN4A and Nav1.5/SCN5A (EC(50)=195-500 nM), Nav1.6/SCN8A (EC(50)=214 nM), and drosophila DmNav1 (EC(50)=30 nM). In mNav1.6/SCN8A, the toxin induces a large increase in both transient and persistent currents, which correlates with a prominent reduction in the fast component of inactivating current. In rNav1.2/SCN2A and rNav1.3/SCN3A, toxin-increased currents is much smaller. Moreover, the toxin only accelerates the slow inactivation development and delay recovery of mNav1.6/SCN8A through binding to the channel in the open state. Is 6-fold more toxic than BmK-M2. In vivo, intrahippocampal injection into rat induces epileptiform responses. In addition, intraplantar injection into rat induces spontaneous nociception and hyperalgesia. This Olivierus martensii (Manchurian scorpion) protein is Alpha-like toxin BmK M1.